A 337-amino-acid chain; its full sequence is 5-formaminoimidazole-4-carboxamide-1-(beta)-D-ribofuranosyl 5'-monophosphate synthetase (337 aa).

Residues H14 and S74 each contribute to the 5-amino-1-(5-phospho-beta-D-ribosyl)imidazole-4-carboxamide site. Residues 81–328 enclose the ATP-grasp domain; that stretch reads VELVERMKVP…IAREIRLAIE (248 aa). Residues 125–185 and E207 contribute to the ATP site; that span reads PDDI…VPVY. A 5-amino-1-(5-phospho-beta-D-ribosyl)imidazole-4-carboxamide-binding site is contributed by N235. Residues E273 and E286 each coordinate Mg(2+).

The protein belongs to the phosphohexose mutase family. Mg(2+) is required as a cofactor. Requires Mn(2+) as cofactor.

It catalyses the reaction 5-amino-1-(5-phospho-beta-D-ribosyl)imidazole-4-carboxamide + formate + ATP = 5-formamido-1-(5-phospho-D-ribosyl)imidazole-4-carboxamide + ADP + phosphate. The protein operates within purine metabolism; IMP biosynthesis via de novo pathway; 5-formamido-1-(5-phospho-D-ribosyl)imidazole-4-carboxamide from 5-amino-1-(5-phospho-D-ribosyl)imidazole-4-carboxamide (formate route): step 1/1. Functionally, catalyzes the ATP- and formate-dependent formylation of 5-aminoimidazole-4-carboxamide-1-beta-d-ribofuranosyl 5'-monophosphate (AICAR) to 5-formaminoimidazole-4-carboxamide-1-beta-d-ribofuranosyl 5'-monophosphate (FAICAR) in the absence of folates. The protein is 5-formaminoimidazole-4-carboxamide-1-(beta)-D-ribofuranosyl 5'-monophosphate synthetase of Pyrococcus abyssi (strain GE5 / Orsay).